Here is a 284-residue protein sequence, read N- to C-terminus: Protein G1-like9 (284 aa).

The tract at residues Met1–Glu69 is disordered. 2 stretches are compositionally biased toward low complexity: residues Ala13 to Ser32 and Gln40 to Ala63. One can recognise an ALOG domain in the interval Arg67–Arg194. A Nuclear localization signal motif is present at residues Lys192–Arg196. A disordered region spans residues Val209–Ser284. Low complexity predominate over residues Thr246–Ser284.

The protein belongs to the plant homeotic and developmental regulators ALOG protein family.

The protein resides in the nucleus. Probable transcription regulator that acts as a developmental regulator by promoting cell growth in response to light. This chain is Protein G1-like9, found in Oryza sativa subsp. indica (Rice).